Here is a 467-residue protein sequence, read N- to C-terminus: Microtubule-associated tyrosine carboxypeptidase 1 (467 aa).

Positions 1 to 10 (MVLDSGTQVY) are enriched in polar residues. Disordered regions lie at residues 1–40 (MVLD…PLYP) and 77–111 (MRRS…TLRP). His-276 contributes to the Zn(2+) binding site. Residue Glu-277 is the Nucleophile of the active site. The Zn(2+) site is built by His-281 and Glu-312.

This sequence belongs to the peptidase MATCAP family. Requires Zn(2+) as cofactor.

The protein resides in the cytoplasm. It is found in the cytoskeleton. It carries out the reaction C-terminal L-alpha-aminoacyl-L-glutamyl-L-glutamyl-L-tyrosyl-[tubulin] + H2O = C-terminal L-alpha-aminoacyl-L-glutamyl-L-glutamyl-[tubulin] + L-tyrosine. It catalyses the reaction C-terminal L-alpha-aminoacyl-L-glutamyl-L-glutamyl-L-phenylalanyl-[tubulin] + H2O = C-terminal L-alpha-aminoacyl-L-glutamyl-L-glutamyl-[tubulin] + L-phenylalanine. Tyrosine carboxypeptidase that removes the C-terminal tyrosine residue of alpha-tubulin, thereby regulating microtubule dynamics and function. Also able to remove the C-terminal phenylalanine residue of alpha-tubulin TUBA8. Recognizes adjacent tubulin dimers along the same protofilament. This Mus musculus (Mouse) protein is Microtubule-associated tyrosine carboxypeptidase 1.